We begin with the raw amino-acid sequence, 943 residues long: Isoleucine--tRNA ligase (943 aa).

The 'HIGH' region motif lies at 58 to 68 (PYANGNIHIGH). Position 567 (Glu-567) interacts with L-isoleucyl-5'-AMP. The short motif at 608 to 612 (KMSKS) is the 'KMSKS' region element. Position 611 (Lys-611) interacts with ATP. Zn(2+)-binding residues include Cys-906, Cys-909, Cys-926, and Cys-929.

The protein belongs to the class-I aminoacyl-tRNA synthetase family. IleS type 1 subfamily. Monomer. The cofactor is Zn(2+).

Its subcellular location is the cytoplasm. It carries out the reaction tRNA(Ile) + L-isoleucine + ATP = L-isoleucyl-tRNA(Ile) + AMP + diphosphate. Its function is as follows. Catalyzes the attachment of isoleucine to tRNA(Ile). As IleRS can inadvertently accommodate and process structurally similar amino acids such as valine, to avoid such errors it has two additional distinct tRNA(Ile)-dependent editing activities. One activity is designated as 'pretransfer' editing and involves the hydrolysis of activated Val-AMP. The other activity is designated 'posttransfer' editing and involves deacylation of mischarged Val-tRNA(Ile). The polypeptide is Isoleucine--tRNA ligase (Stutzerimonas stutzeri (strain A1501) (Pseudomonas stutzeri)).